The sequence spans 467 residues: Putative sulfoquinovose importer (467 aa).

12 helical membrane passes run 17–37 (IAYG…TLYL), 54–74 (IIFL…GFLL), 88–108 (PFIL…FIAT), 121–141 (ALFM…GAMI), 160–180 (GGAT…QSLF), 185–205 (VGYA…MMLC), 238–258 (LLVL…KLAI), 275–295 (WMGF…PLTV), 303–323 (VYLA…FWGS), 325–345 (SFTF…VNSL), 379–399 (ISAA…GYVP), and 414–434 (LIFI…GFFY).

The protein belongs to the sodium:galactoside symporter (TC 2.A.2) family.

It is found in the cell inner membrane. Functionally, could be involved in sulfoquinovose import. This is Putative sulfoquinovose importer (yihO) from Escherichia coli (strain K12).